A 49-amino-acid polypeptide reads, in one-letter code: Osteocalcin (49 aa).

The residue at position 1 (Q1) is a Pyrrolidone carboxylic acid. The Gla domain maps to 1 to 47; that stretch reads QLINGQGAPAPYPDPLEPKREVCELNPDCDELADQVGLQDAYQRFYG. At P9 the chain carries 4-hydroxyproline. The Ca(2+) site is built by E17, E21, E24, and D30. 4-carboxyglutamate is present on residues E17, E21, and E24. A disulfide bridge connects residues C23 and C29.

This sequence belongs to the osteocalcin/matrix Gla protein family. Gamma-carboxyglutamate residues are formed by vitamin K dependent carboxylation by GGCX. These residues are essential for the binding of calcium. Decarboxylation promotes the hormone activity.

Its subcellular location is the secreted. Its function is as follows. The carboxylated form is one of the main organic components of the bone matrix, which constitutes 1-2% of the total bone protein: it acts as a negative regulator of bone formation and is required to limit bone formation without impairing bone resorption or mineralization. The carboxylated form binds strongly to apatite and calcium. In terms of biological role, the uncarboxylated form acts as a hormone secreted by osteoblasts, which regulates different cellular processes, such as energy metabolism, male fertility and brain development. Regulates of energy metabolism by acting as a hormone favoring pancreatic beta-cell proliferation, insulin secretion and sensitivity and energy expenditure. Uncarboxylated osteocalcin hormone also promotes testosterone production in the testes: acts as a ligand for G protein-coupled receptor GPRC6A at the surface of Leydig cells, initiating a signaling response that promotes the expression of enzymes required for testosterone synthesis in a CREB-dependent manner. Also acts as a regulator of brain development: osteocalcin hormone crosses the blood-brain barrier and acts as a ligand for GPR158 on neurons, initiating a signaling response that prevents neuronal apoptosis in the hippocampus, favors the synthesis of all monoamine neurotransmitters and inhibits that of gamma-aminobutyric acid (GABA). Osteocalcin also crosses the placenta during pregnancy and maternal osteocalcin is required for fetal brain development. The sequence is that of Osteocalcin (BGLAP) from Oryctolagus cuniculus (Rabbit).